The sequence spans 313 residues: Ribosomal protein L11 methyltransferase (313 aa).

Positions 164, 185, 207, and 249 each coordinate S-adenosyl-L-methionine.

This sequence belongs to the methyltransferase superfamily. PrmA family.

The protein resides in the cytoplasm. It catalyses the reaction L-lysyl-[protein] + 3 S-adenosyl-L-methionine = N(6),N(6),N(6)-trimethyl-L-lysyl-[protein] + 3 S-adenosyl-L-homocysteine + 3 H(+). Its function is as follows. Methylates ribosomal protein L11. The sequence is that of Ribosomal protein L11 methyltransferase from Clostridium botulinum (strain Alaska E43 / Type E3).